A 346-amino-acid polypeptide reads, in one-letter code: Olfactory receptor 8G5 (346 aa).

At 1–60 (MIIYKQGITFLQKENNNTIHLNTMFFLSPAETHQRMAAENHSFVTKFILVGLTEKSELQL) the chain is on the extracellular side. N-linked (GlcNAc...) asparagine glycans are attached at residues Asn-16 and Asn-40. Residues 61–81 (PLFLVFLGIYVVTVLGNLGMI) form a helical membrane-spanning segment. The Cytoplasmic portion of the chain corresponds to 82–89 (TLIGLSSH). Residues 90-110 (LHTPMYCFLSSLSFIDFCHST) traverse the membrane as a helical segment. The Extracellular portion of the chain corresponds to 111–134 (VITPKMLVNFVTEKNIISYPECMT). Cys-132 and Cys-214 are disulfide-bonded. The chain crosses the membrane as a helical span at residues 135-155 (QLYFFLVFAIAECHMLAAMAY). The Cytoplasmic segment spans residues 156–174 (DGYVAICSPLLYSIIISNK). A helical membrane pass occupies residues 175–195 (ACFSLILVVYVIGLICASAHI). The Extracellular segment spans residues 196–232 (GCMFRVQFCKFDVINHYFCDLISILKLSCSSTYINEL). The chain crosses the membrane as a helical span at residues 233–252 (LILIFSGINILVPSLTILSS). The Cytoplasmic segment spans residues 253 to 272 (YIFIIASILRIRYTEGRSKA). The helical transmembrane segment at 273-293 (FSTCSSHISAVSVFFGSAAFM) threads the bilayer. At 294 to 306 (YLQPSSVSSMDQG) the chain is on the extracellular side. A helical transmembrane segment spans residues 307–327 (KVSSVFYTIVVPMLNPLIYSL). Over 328–346 (RNKDVHVALKKTLGKRTFL) the chain is Cytoplasmic.

This sequence belongs to the G-protein coupled receptor 1 family.

It localises to the cell membrane. In terms of biological role, odorant receptor. The sequence is that of Olfactory receptor 8G5 (OR8G5) from Homo sapiens (Human).